The following is a 198-amino-acid chain: Glycerol-3-phosphate acyltransferase (198 aa).

The next 5 helical transmembrane spans lie at 10 to 30, 57 to 77, 86 to 106, 118 to 138, and 160 to 180; these read LIPI…WILV, GISF…ILIL, IMYL…WFLF, VVLS…AVVF, and AVTE…IVLI.

It belongs to the PlsY family. In terms of assembly, probably interacts with PlsX.

It localises to the cell inner membrane. The enzyme catalyses an acyl phosphate + sn-glycerol 3-phosphate = a 1-acyl-sn-glycero-3-phosphate + phosphate. The protein operates within lipid metabolism; phospholipid metabolism. Its function is as follows. Catalyzes the transfer of an acyl group from acyl-phosphate (acyl-PO(4)) to glycerol-3-phosphate (G3P) to form lysophosphatidic acid (LPA). This enzyme utilizes acyl-phosphate as fatty acyl donor, but not acyl-CoA or acyl-ACP. The sequence is that of Glycerol-3-phosphate acyltransferase from Anaplasma marginale (strain St. Maries).